The sequence spans 938 residues: Chaperone protein ClpD1, chloroplastic (938 aa).

Residues 1–83 (MEVCCCSTSS…FERFTERAVK (83 aa)) constitute a chloroplast transit peptide. 2 repeat regions span residues 84 to 145 (AVVL…TPGA) and 159 to 224 (FSGS…LQAE). In terms of domain architecture, Clp R spans 84–224 (AVVLSQREAK…SVALTRLQAE (141 aa)). Positions 234–255 (GASSFKVPKKSPAGAGRSAFSK) are disordered. The i stretch occupies residues 266–519 (LDQFCLDLTT…RMESFNRKKE (254 aa)). ATP contacts are provided by residues 311 to 318 (GEAGVGKT) and 660 to 667 (GPTGVGKT). The tract at residues 586-777 (VGTEEIARVA…LIVMTSNIGS (192 aa)) is II.

Belongs to the ClpA/ClpB family. ClpD subfamily. In terms of tissue distribution, expressed in stems, culms and leaves.

It is found in the plastid. The protein resides in the chloroplast. Functionally, molecular chaperone that may function in heat stress response. May interact with a ClpP-like protease involved in degradation of denatured proteins in the chloroplast. Chaperone involved in response to abiotic stresses. Plays a positive role during dehydration and salt stress. The polypeptide is Chaperone protein ClpD1, chloroplastic (Oryza sativa subsp. japonica (Rice)).